The following is a 343-amino-acid chain: Uroporphyrinogen decarboxylase (343 aa).

Residues 23 to 27 (RQAGR), aspartate 73, tyrosine 150, serine 205, and histidine 322 each bind substrate.

Belongs to the uroporphyrinogen decarboxylase family. Homodimer.

The protein resides in the cytoplasm. It catalyses the reaction uroporphyrinogen III + 4 H(+) = coproporphyrinogen III + 4 CO2. It participates in porphyrin-containing compound metabolism; protoporphyrin-IX biosynthesis; coproporphyrinogen-III from 5-aminolevulinate: step 4/4. In terms of biological role, catalyzes the decarboxylation of four acetate groups of uroporphyrinogen-III to yield coproporphyrinogen-III. The polypeptide is Uroporphyrinogen decarboxylase (Cereibacter sphaeroides (strain KD131 / KCTC 12085) (Rhodobacter sphaeroides)).